Consider the following 105-residue polypeptide: Large ribosomal subunit protein uL24 (105 aa).

The protein belongs to the universal ribosomal protein uL24 family. As to quaternary structure, part of the 50S ribosomal subunit.

One of two assembly initiator proteins, it binds directly to the 5'-end of the 23S rRNA, where it nucleates assembly of the 50S subunit. Its function is as follows. One of the proteins that surrounds the polypeptide exit tunnel on the outside of the subunit. In Staphylococcus haemolyticus (strain JCSC1435), this protein is Large ribosomal subunit protein uL24.